We begin with the raw amino-acid sequence, 248 residues long: Probable transcriptional regulatory protein PHZ_c3068 (248 aa).

Belongs to the TACO1 family.

The protein localises to the cytoplasm. In Phenylobacterium zucineum (strain HLK1), this protein is Probable transcriptional regulatory protein PHZ_c3068.